Reading from the N-terminus, the 664-residue chain is Glycine--tRNA ligase beta subunit (664 aa).

This sequence belongs to the class-II aminoacyl-tRNA synthetase family. In terms of assembly, tetramer of two alpha and two beta subunits.

It is found in the cytoplasm. The enzyme catalyses tRNA(Gly) + glycine + ATP = glycyl-tRNA(Gly) + AMP + diphosphate. This is Glycine--tRNA ligase beta subunit from Rickettsia peacockii (strain Rustic).